Reading from the N-terminus, the 155-residue chain is Large ribosomal subunit protein uL13 (155 aa).

This sequence belongs to the universal ribosomal protein uL13 family. In terms of assembly, part of the 50S ribosomal subunit.

Its function is as follows. This protein is one of the early assembly proteins of the 50S ribosomal subunit, although it is not seen to bind rRNA by itself. It is important during the early stages of 50S assembly. This chain is Large ribosomal subunit protein uL13, found in Aeropyrum pernix (strain ATCC 700893 / DSM 11879 / JCM 9820 / NBRC 100138 / K1).